Reading from the N-terminus, the 707-residue chain is Serine/threonine protein kinase UL97 (707 aa).

Residues 1-14 are compositionally biased toward low complexity; sequence MSSALRSRARSASL. Disordered regions lie at residues 1–32, 113–147, 176–199, and 231–264; these read MSSA…PSRA, DGEK…DGYH, FTGG…PLRP, and ESQD…EADS. A compositionally biased stretch (basic and acidic residues) spans 113-127; it reads DGEKEDAASDKENQR. Positions 178-188 are enriched in low complexity; the sequence is GGSDPSDSVSG. Aspartate 456 functions as the Proton acceptor in the catalytic mechanism.

The protein belongs to the protein kinase superfamily. Tyr protein kinase family. HCMV ganciclovir subfamily. In terms of assembly, interacts with UL83. In terms of processing, autophosphorylates on serine and threonine residues.

It is found in the virion. The catalysed reaction is L-seryl-[protein] + ATP = O-phospho-L-seryl-[protein] + ADP + H(+). It catalyses the reaction L-threonyl-[protein] + ATP = O-phospho-L-threonyl-[protein] + ADP + H(+). Its function is as follows. Serine/threonine protein kinase that plays important roles in several processes including nuclear viral egress, viral replication or regulation of host cell cycle progression. Participates in the acquisition of tegument during virion morphogenesis in the nucleus. Redistributes the host nuclear lamina by phosphorylating cellular Lamins-A/C. Plays a role in viral DNA synthesis by phosphorylating the DNA polymerase processivity factor UL44. Stimulates host cell cycle to support viral DNA synthesis by phosphorylating host retinoblastoma/RB1 protein. Additional substrates have been identified including host EF1D or H2B. Also phosphorylates host SAMHD1 and thereby counteracts its antiviral effect by reducing its dNTP hydrolase activity. This is Serine/threonine protein kinase UL97 (UL97) from Homo sapiens (Human).